We begin with the raw amino-acid sequence, 856 residues long: DNA mismatch repair protein MutS (856 aa).

Residue Gly607–Ser614 coordinates ATP.

Belongs to the DNA mismatch repair MutS family.

In terms of biological role, this protein is involved in the repair of mismatches in DNA. It is possible that it carries out the mismatch recognition step. This protein has a weak ATPase activity. The polypeptide is DNA mismatch repair protein MutS (Lactobacillus delbrueckii subsp. bulgaricus (strain ATCC BAA-365 / Lb-18)).